The following is a 378-amino-acid chain: Ribosomal RNA large subunit methyltransferase G (378 aa).

This sequence belongs to the methyltransferase superfamily. RlmG family.

It is found in the cytoplasm. It carries out the reaction guanosine(1835) in 23S rRNA + S-adenosyl-L-methionine = N(2)-methylguanosine(1835) in 23S rRNA + S-adenosyl-L-homocysteine + H(+). Specifically methylates the guanine in position 1835 (m2G1835) of 23S rRNA. The sequence is that of Ribosomal RNA large subunit methyltransferase G from Escherichia coli O139:H28 (strain E24377A / ETEC).